Reading from the N-terminus, the 357-residue chain is Mating-type protein MAT-1 (357 aa).

A DNA-binding region (alpha box) is located at residues 53–108; sequence RAKRPLNAFMAFRTYYLKLFPDTQQKNASGFLTQLWGGDPHRNKWALIAKVYSFLR.

It belongs to the MATALPHA1 family.

It localises to the nucleus. Its function is as follows. Mating type proteins are sequence specific DNA-binding proteins that act as master switches in fungal differentiation by controlling gene expression in a cell type-specific fashion. Transcriptional activator that induces the transcription of alpha-specific genes. The sequence is that of Mating-type protein MAT-1 (MAT1) from Fusarium oxysporum (Fusarium vascular wilt).